Reading from the N-terminus, the 362-residue chain is GTPase Obg (362 aa).

The Obg domain occupies 1–159; that stretch reads MKFIDEARIE…RKLKLELKVL (159 aa). The segment at 129–148 is disordered; that stretch reads HFKSSTNRAPRQKTNGKEGE. Residues 130 to 141 are compositionally biased toward polar residues; it reads FKSSTNRAPRQK. An OBG-type G domain is found at 160–334; sequence ADVGLLGMPN…LCYALQDYLD (175 aa). GTP is bound by residues 166–173, 191–195, 213–216, 284–287, and 315–317; these read GMPNAGKS, FTTLH, DIPG, NKVD, and SAL. Positions 173 and 193 each coordinate Mg(2+). The disordered stretch occupies residues 340 to 362; the sequence is RDDAEERAADPRYQDQAADKSPD.

It belongs to the TRAFAC class OBG-HflX-like GTPase superfamily. OBG GTPase family. Monomer. Requires Mg(2+) as cofactor.

It localises to the cytoplasm. An essential GTPase which binds GTP, GDP and possibly (p)ppGpp with moderate affinity, with high nucleotide exchange rates and a fairly low GTP hydrolysis rate. Plays a role in control of the cell cycle, stress response, ribosome biogenesis and in those bacteria that undergo differentiation, in morphogenesis control. The protein is GTPase Obg of Polynucleobacter asymbioticus (strain DSM 18221 / CIP 109841 / QLW-P1DMWA-1) (Polynucleobacter necessarius subsp. asymbioticus).